Here is a 455-residue protein sequence, read N- to C-terminus: Kynurenine 3-monooxygenase (455 aa).

It belongs to the aromatic-ring hydroxylase family. KMO subfamily. The cofactor is FAD.

The enzyme catalyses L-kynurenine + NADPH + O2 + H(+) = 3-hydroxy-L-kynurenine + NADP(+) + H2O. The protein operates within cofactor biosynthesis; NAD(+) biosynthesis; quinolinate from L-kynurenine: step 1/3. Functionally, catalyzes the hydroxylation of L-kynurenine (L-Kyn) to form 3-hydroxy-L-kynurenine (L-3OHKyn). Required for synthesis of quinolinic acid. In Stenotrophomonas maltophilia (strain K279a), this protein is Kynurenine 3-monooxygenase.